The sequence spans 138 residues: Spermatid nuclear transition protein 4 (138 aa).

The segment covering 1–11 has biased composition (basic and acidic residues); the sequence is AKVSRKPREPR. A disordered region spans residues 1 to 138; that stretch reads AKVSRKPREP…QGVTRRGRRY (138 aa). Residue S4 is modified to Phosphoserine; by PKC. The short motif at 5–23 is the Nuclear localization signal element; the sequence is RKPREPRTAVTQSTRRIKR. Composition is skewed to basic residues over residues 19 to 34, 43 to 57, and 65 to 74; these read RRIK…RSRG, MKIK…RRKI, and KKAKKARKHF. Phosphothreonine; by PKA is present on T26. Positions 54 to 72 match the Nuclear localization signal motif; it reads RRKIQTSAGQPKKAKKARK. A compositionally biased stretch (low complexity) spans 86–101; the sequence is NKKTNQNKRQNQNKRQ. The span at 120 to 131 shows a compositional bias: polar residues; the sequence is PTTSCKWCSQGV.

Its subcellular location is the nucleus. It is found in the chromosome. Its function is as follows. Involved in nuclear basic protein transition: histones are replaced by spermatid specific proteins which are themselves replaced by protamines in late spermatids. The polypeptide is Spermatid nuclear transition protein 4 (TNP4) (Sus scrofa (Pig)).